The primary structure comprises 511 residues: Tryptophan 5-halogenase PyrH (511 aa).

7 residues coordinate FAD: Gly10, Ala13, Ser36, Val39, Ile42, Val44, and Ala47. Residue Ser50 participates in L-tryptophan binding. Lys75 is a catalytic residue. Residues Pro93, Gln160, and Gln163 each contribute to the L-tryptophan site. Residues Val195 and Leu345 each coordinate FAD. Residues Thr356 and Gly357 each contribute to the chloride site. Ile358 lines the FAD pocket. Residues Gly450 and Tyr454 each contribute to the L-tryptophan site.

The protein belongs to the flavin-dependent halogenase family. Bacterial tryptophan halogenase subfamily. In terms of assembly, homodimer.

It catalyses the reaction L-tryptophan + FADH2 + chloride + O2 = 5-chloro-L-tryptophan + FAD + 2 H2O. It participates in antibiotic biosynthesis. Involved in the biosynthesis of the antibiotic compound pyrroindomycin B. Catalyzes the chlorination of tryptophan (Trp) at C5 position to yield 5-chloro-L-tryptophan. It is also able to use bromide ions to generate monobrominated Trp, but the brominating activity is only about 75% of the chlorinating activity. The protein is Tryptophan 5-halogenase PyrH of Streptomyces rugosporus.